The primary structure comprises 858 residues: DNA mismatch repair protein MutS (858 aa).

637-644 (GPNMAGKS) serves as a coordination point for ATP.

This sequence belongs to the DNA mismatch repair MutS family.

Its function is as follows. This protein is involved in the repair of mismatches in DNA. It is possible that it carries out the mismatch recognition step. This protein has a weak ATPase activity. This chain is DNA mismatch repair protein MutS, found in Protochlamydia amoebophila (strain UWE25).